The chain runs to 236 residues: THO complex subunit 7B (236 aa).

Residues 99 to 228 (EANLREKESF…IRSASEDQRN (130 aa)) are a coiled coil.

This sequence belongs to the THOC7 family. Component of the THO complex, which is composed of THO1, THO2, THO3, THO5, THO6 and THO7.

The protein localises to the nucleus. Its function is as follows. Acts as a component of the THO subcomplex of the TREX complex which is thought to couple mRNA transcription, processing and nuclear export. This Arabidopsis thaliana (Mouse-ear cress) protein is THO complex subunit 7B (THO7B).